The chain runs to 188 residues: Proline-rich protein 3 (188 aa).

A disordered region spans residues 1–157 (MPKRKKQNHH…DPQVMEDKSD (157 aa)). Composition is skewed to pro residues over residues 35–46 (IGPPSLLGPPPM) and 69–82 (LIPP…PPWG). A compositionally biased stretch (low complexity) spans 83-96 (RGPIRRGLGPRSSP). Residues 145 to 157 (PKDDPQVMEDKSD) are compositionally biased toward basic and acidic residues. The C3H1-type zinc finger occupies 155-183 (KSDRPVCRHFAKKGHCRYEDLCAFYHPGV).

The polypeptide is Proline-rich protein 3 (PRR3) (Homo sapiens (Human)).